Reading from the N-terminus, the 164-residue chain is B-phycoerythrin alpha chain (164 aa).

(2R,3E)-phycoerythrobilin-binding residues include C82 and C139.

This sequence belongs to the phycobiliprotein family. In terms of assembly, heteromer of 6 alpha, 6 beta and one gamma chain. In terms of processing, contains two covalently linked bilin chromophores.

The protein localises to the plastid. Its subcellular location is the chloroplast thylakoid membrane. Its function is as follows. Light-harvesting photosynthetic bile pigment-protein from the phycobiliprotein complex. This Porphyridium purpureum (Red alga) protein is B-phycoerythrin alpha chain (cpeA).